A 107-amino-acid polypeptide reads, in one-letter code: Large ribosomal subunit protein uL24 (107 aa).

It belongs to the universal ribosomal protein uL24 family. As to quaternary structure, part of the 50S ribosomal subunit.

Its function is as follows. One of two assembly initiator proteins, it binds directly to the 5'-end of the 23S rRNA, where it nucleates assembly of the 50S subunit. One of the proteins that surrounds the polypeptide exit tunnel on the outside of the subunit. This Solidesulfovibrio magneticus (strain ATCC 700980 / DSM 13731 / RS-1) (Desulfovibrio magneticus) protein is Large ribosomal subunit protein uL24.